The sequence spans 482 residues: Glutamate--tRNA ligase (482 aa).

The 'HIGH' region motif lies at 9 to 19; that stretch reads PSPTGPLHIGG. Positions 250–254 match the 'KMSKS' region motif; it reads KMSKR. Lysine 253 is a binding site for ATP.

Belongs to the class-I aminoacyl-tRNA synthetase family. Glutamate--tRNA ligase type 1 subfamily. As to quaternary structure, monomer.

The protein resides in the cytoplasm. The catalysed reaction is tRNA(Glu) + L-glutamate + ATP = L-glutamyl-tRNA(Glu) + AMP + diphosphate. Catalyzes the attachment of glutamate to tRNA(Glu) in a two-step reaction: glutamate is first activated by ATP to form Glu-AMP and then transferred to the acceptor end of tRNA(Glu). This chain is Glutamate--tRNA ligase, found in Desulforamulus reducens (strain ATCC BAA-1160 / DSM 100696 / MI-1) (Desulfotomaculum reducens).